An 810-amino-acid polypeptide reads, in one-letter code: Nuclear pore complex protein NUP88 (810 aa).

The tract at residues 1–23 (MKFNFNETEDAPDSRRSPTPKEP) is disordered. The stretch at 646–748 (APNLKRIIDD…RARVKKSTQK (103 aa)) forms a coiled coil.

Part of the nuclear pore complex (NPC). The NPC has an eight-fold symmetrical structure comprising a central transport channel and two rings, the cytoplasmic and nuclear rings, to which eight filaments are attached. The cytoplasmic filaments have loose ends, while the nuclear filaments are joined in a distal ring, forming a nuclear basket. NPCs are highly dynamic in configuration and composition, and can be devided in 3 subcomplexes, the NUP62 subcomplex, the NUP107-160 subcomplex and the NUP93 subcomplex, containing approximately 30 different nucleoporin proteins.

It is found in the nucleus envelope. The protein localises to the nucleus. It localises to the nuclear pore complex. Its function is as follows. Involved in the regulation of exportin-mediated nuclear protein export. Required for resistance mediated by multiple R proteins and for the appropriate nuclear accumulation of SNC1 and of the downstream defense signaling components EDS1 and NPR1. Not involved in salt tolerance, ethylene and auxin responses, but required for systemic acquired resistance. The chain is Nuclear pore complex protein NUP88 from Arabidopsis thaliana (Mouse-ear cress).